A 175-amino-acid chain; its full sequence is Shikimate kinase (175 aa).

Residue 12-17 coordinates ATP; sequence GAGKTT. Thr-16 lines the Mg(2+) pocket. Residues Asp-34, Arg-58, and Gly-80 each coordinate substrate. Residue Arg-117 participates in ATP binding. Arg-136 contacts substrate.

The protein belongs to the shikimate kinase family. Monomer. Requires Mg(2+) as cofactor.

The protein resides in the cytoplasm. The enzyme catalyses shikimate + ATP = 3-phosphoshikimate + ADP + H(+). It participates in metabolic intermediate biosynthesis; chorismate biosynthesis; chorismate from D-erythrose 4-phosphate and phosphoenolpyruvate: step 5/7. Its function is as follows. Catalyzes the specific phosphorylation of the 3-hydroxyl group of shikimic acid using ATP as a cosubstrate. This is Shikimate kinase from Saccharopolyspora erythraea (strain ATCC 11635 / DSM 40517 / JCM 4748 / NBRC 13426 / NCIMB 8594 / NRRL 2338).